Reading from the N-terminus, the 211-residue chain is Uracil phosphoribosyltransferase (211 aa).

Residues arginine 81, arginine 106, and 133-141 (DPMLATGNS) each bind 5-phospho-alpha-D-ribose 1-diphosphate. Residues isoleucine 196 and 201 to 203 (GDA) each bind uracil. A 5-phospho-alpha-D-ribose 1-diphosphate-binding site is contributed by aspartate 202.

The protein belongs to the UPRTase family. Requires Mg(2+) as cofactor.

It carries out the reaction UMP + diphosphate = 5-phospho-alpha-D-ribose 1-diphosphate + uracil. It functions in the pathway pyrimidine metabolism; UMP biosynthesis via salvage pathway; UMP from uracil: step 1/1. Its activity is regulated as follows. Allosterically activated by GTP. Catalyzes the conversion of uracil and 5-phospho-alpha-D-ribose 1-diphosphate (PRPP) to UMP and diphosphate. In Myxococcus xanthus (strain DK1622), this protein is Uracil phosphoribosyltransferase.